Reading from the N-terminus, the 271-residue chain is Putative cysteine protease YopT-like blr2140 (271 aa).

Residues 1-81 (MYDRIGGSST…STSSPESPAT (81 aa)) are disordered. A compositionally biased stretch (polar residues) spans 7-29 (GSSTRTSQTDEPSQSVDSGSFTE). Residues 65–81 (TSSASEPSTSSPESPAT) are compositionally biased toward low complexity. C100 is a catalytic residue. The disordered stretch occupies residues 114 to 136 (SPSTRMSALTPGSQTHASAAERQ). Active-site residues include H213 and D228.

The protein belongs to the peptidase C58 family.

In terms of biological role, potential cysteine protease, which may play a central role after invasion of host cell. The sequence is that of Putative cysteine protease YopT-like blr2140 from Bradyrhizobium diazoefficiens (strain JCM 10833 / BCRC 13528 / IAM 13628 / NBRC 14792 / USDA 110).